A 178-amino-acid polypeptide reads, in one-letter code: Translation initiation factor IF-3 (178 aa).

It belongs to the IF-3 family. In terms of assembly, monomer.

It is found in the cytoplasm. In terms of biological role, IF-3 binds to the 30S ribosomal subunit and shifts the equilibrium between 70S ribosomes and their 50S and 30S subunits in favor of the free subunits, thus enhancing the availability of 30S subunits on which protein synthesis initiation begins. The sequence is that of Translation initiation factor IF-3 from Legionella pneumophila (strain Paris).